Here is a 422-residue protein sequence, read N- to C-terminus: Proline-rich protein 22 (422 aa).

Disordered regions lie at residues 1 to 35, 306 to 325, and 363 to 422; these read MQHPKPFCAPAAPQEGFSPQSLEGAEVLGNQPAPT, LCEVPGPALPDSSGGNSADD, and EEQP…ATPH. Positions 383-400 are enriched in basic residues; sequence GKRKASTAKKGKPGRKAR. The segment covering 413–422 has biased composition (basic and acidic residues); the sequence is PREDLGATPH.

The sequence is that of Proline-rich protein 22 (PRR22) from Homo sapiens (Human).